The following is a 122-amino-acid chain: uncharacterized protein (122 aa).

Transmembrane regions (helical) follow at residues 21–40 (VWSW…SIAI), 57–77 (YTHM…CICI), and 94–114 (LLFS…YCIY).

It is found in the membrane. This is an uncharacterized protein from Saccharomyces cerevisiae (strain ATCC 204508 / S288c) (Baker's yeast).